We begin with the raw amino-acid sequence, 197 residues long: Ribosomal RNA large subunit methyltransferase E (197 aa).

Residues G50, W52, D67, D83, and D111 each contribute to the S-adenosyl-L-methionine site. K151 (proton acceptor) is an active-site residue.

It belongs to the class I-like SAM-binding methyltransferase superfamily. RNA methyltransferase RlmE family.

The protein localises to the cytoplasm. It carries out the reaction uridine(2552) in 23S rRNA + S-adenosyl-L-methionine = 2'-O-methyluridine(2552) in 23S rRNA + S-adenosyl-L-homocysteine + H(+). Functionally, specifically methylates the uridine in position 2552 of 23S rRNA at the 2'-O position of the ribose in the fully assembled 50S ribosomal subunit. This Thermoplasma volcanium (strain ATCC 51530 / DSM 4299 / JCM 9571 / NBRC 15438 / GSS1) protein is Ribosomal RNA large subunit methyltransferase E.